A 362-amino-acid polypeptide reads, in one-letter code: 3-dehydroquinate synthase (362 aa).

Residues 71-76, 105-109, 129-130, Lys142, Lys151, and 169-172 each bind NAD(+); these read DGEQYK, GVVGD, TT, and CLKT. Glu184, His247, and His264 together coordinate Zn(2+).

The protein belongs to the sugar phosphate cyclases superfamily. Dehydroquinate synthase family. Requires Co(2+) as cofactor. The cofactor is Zn(2+). NAD(+) is required as a cofactor.

Its subcellular location is the cytoplasm. It catalyses the reaction 7-phospho-2-dehydro-3-deoxy-D-arabino-heptonate = 3-dehydroquinate + phosphate. Its pathway is metabolic intermediate biosynthesis; chorismate biosynthesis; chorismate from D-erythrose 4-phosphate and phosphoenolpyruvate: step 2/7. In terms of biological role, catalyzes the conversion of 3-deoxy-D-arabino-heptulosonate 7-phosphate (DAHP) to dehydroquinate (DHQ). The sequence is that of 3-dehydroquinate synthase from Escherichia coli O81 (strain ED1a).